The sequence spans 272 residues: Large ribosomal subunit protein uL2cz/uL2cy (272 aa).

A compositionally biased stretch (polar residues) spans 1–13 (MHLYKTSTPSTRN). 2 disordered regions span residues 1 to 27 (MHLY…PRNN) and 222 to 272 (NPVD…RRSK).

It belongs to the universal ribosomal protein uL2 family. As to quaternary structure, part of the 50S ribosomal subunit.

The protein localises to the plastid. It is found in the chloroplast. The sequence is that of Large ribosomal subunit protein uL2cz/uL2cy (rpl2-A) from Buxus microphylla (Littleleaf boxwood).